The primary structure comprises 505 residues: Cytochrome P450 9b2 (505 aa).

Cysteine 449 is a heme binding site.

Belongs to the cytochrome P450 family. Heme serves as cofactor.

The protein localises to the endoplasmic reticulum membrane. Its subcellular location is the microsome membrane. May be involved in the metabolism of insect hormones and in the breakdown of synthetic insecticides. This chain is Cytochrome P450 9b2 (Cyp9b2), found in Drosophila melanogaster (Fruit fly).